Here is a 665-residue protein sequence, read N- to C-terminus: Beta-galactosidase LacZ (665 aa).

Residue Arg-110 participates in substrate binding. Cys-114 is a Zn(2+) binding site. Asn-148 contributes to the substrate binding site. Glu-149 acts as the Proton donor in catalysis. Positions 157, 159, and 162 each coordinate Zn(2+). The active-site Nucleophile is Glu-303. Substrate is bound by residues Trp-311 and 351 to 354 (EKFH).

It belongs to the glycosyl hydrolase 42 family.

It catalyses the reaction Hydrolysis of terminal non-reducing beta-D-galactose residues in beta-D-galactosides.. The protein is Beta-galactosidase LacZ of Heyndrickxia coagulans (Weizmannia coagulans).